Reading from the N-terminus, the 418-residue chain is Probable cysteine desulfurase 2 (418 aa).

Residue Lys-234 is modified to N6-(pyridoxal phosphate)lysine. Cys-374 acts as the Cysteine persulfide intermediate in catalysis.

This sequence belongs to the class-V pyridoxal-phosphate-dependent aminotransferase family. Csd subfamily. It depends on pyridoxal 5'-phosphate as a cofactor.

The enzyme catalyses (sulfur carrier)-H + L-cysteine = (sulfur carrier)-SH + L-alanine. Functionally, catalyzes the removal of elemental sulfur and selenium atoms from L-cysteine, L-cystine, L-selenocysteine, and L-selenocystine to produce L-alanine. This Mycobacterium leprae (strain TN) protein is Probable cysteine desulfurase 2 (csd2).